The sequence spans 275 residues: Type III pantothenate kinase (275 aa).

Residue 6–13 (DAGNTNIV) participates in ATP binding. 108–111 (GADR) contacts substrate. D110 acts as the Proton acceptor in catalysis. A K(+)-binding site is contributed by D130. T133 serves as a coordination point for ATP. T187 lines the substrate pocket.

It belongs to the type III pantothenate kinase family. In terms of assembly, homodimer. NH4(+) serves as cofactor. It depends on K(+) as a cofactor.

The protein localises to the cytoplasm. It catalyses the reaction (R)-pantothenate + ATP = (R)-4'-phosphopantothenate + ADP + H(+). It functions in the pathway cofactor biosynthesis; coenzyme A biosynthesis; CoA from (R)-pantothenate: step 1/5. Catalyzes the phosphorylation of pantothenate (Pan), the first step in CoA biosynthesis. The protein is Type III pantothenate kinase of Zymomonas mobilis subsp. mobilis (strain ATCC 31821 / ZM4 / CP4).